A 448-amino-acid polypeptide reads, in one-letter code: Putative RNA-ligase (448 aa).

This sequence belongs to the asfivirus M448R family.

It localises to the virion. The protein is Putative RNA-ligase of African swine fever virus (isolate Pig/Kenya/KEN-50/1950) (ASFV).